The chain runs to 135 residues: Large ribosomal subunit protein uL16c (135 aa).

The protein belongs to the universal ribosomal protein uL16 family. As to quaternary structure, part of the 50S ribosomal subunit.

The protein resides in the plastid. It is found in the chloroplast. This is Large ribosomal subunit protein uL16c from Ranunculus macranthus (Large buttercup).